The sequence spans 779 residues: Probable phosphoketolase 2 (779 aa).

It belongs to the XFP family. Thiamine diphosphate serves as cofactor.

The chain is Probable phosphoketolase 2 from Rhizobium meliloti (strain 1021) (Ensifer meliloti).